A 259-amino-acid chain; its full sequence is MRYALGIEYDGKNYCGWQRQNNVITVQEKLEKALSKIADEKIEVVCAGRTDTGVNATNQVIHFDTEKKRKDTAWTLGVNTHLPSDVAVAWVKKVDDDFHARFSATARNYRYIIYNKPLRSAILSHGISHCHFALDENLMQQGADYLLGKHDFTSFRTVHCQSHSAVRTIKHCRVTRQGDYLVVDIKANAFLHHMVRNVVGSLMRVGQSQETPHWMKEVLLAKNRCVAGVTAPPEGLYFVDVDYPENFELPKSRLGPLFL.

The active-site Nucleophile is Asp-51. Tyr-109 contacts substrate.

This sequence belongs to the tRNA pseudouridine synthase TruA family. Homodimer.

The catalysed reaction is uridine(38/39/40) in tRNA = pseudouridine(38/39/40) in tRNA. Functionally, formation of pseudouridine at positions 38, 39 and 40 in the anticodon stem and loop of transfer RNAs. The chain is tRNA pseudouridine synthase A from Colwellia psychrerythraea (strain 34H / ATCC BAA-681) (Vibrio psychroerythus).